Consider the following 430-residue polypeptide: Tol-Pal system protein TolB (430 aa).

The N-terminal stretch at 1 to 21 is a signal peptide; it reads MRRFVTLLIALLCLSATAVQA.

This sequence belongs to the TolB family. The Tol-Pal system is composed of five core proteins: the inner membrane proteins TolA, TolQ and TolR, the periplasmic protein TolB and the outer membrane protein Pal. They form a network linking the inner and outer membranes and the peptidoglycan layer.

The protein resides in the periplasm. Part of the Tol-Pal system, which plays a role in outer membrane invagination during cell division and is important for maintaining outer membrane integrity. This Syntrophotalea carbinolica (strain DSM 2380 / NBRC 103641 / GraBd1) (Pelobacter carbinolicus) protein is Tol-Pal system protein TolB.